Here is a 337-residue protein sequence, read N- to C-terminus: Glyceraldehyde-3-phosphate dehydrogenase (337 aa).

Residues 12 to 13 (RI), aspartate 34, and arginine 79 each bind NAD(+). D-glyceraldehyde 3-phosphate-binding positions include 150-152 (SCT), threonine 181, 210-211 (TG), and arginine 233. Cysteine 151 functions as the Nucleophile in the catalytic mechanism. Asparagine 315 provides a ligand contact to NAD(+).

This sequence belongs to the glyceraldehyde-3-phosphate dehydrogenase family. As to quaternary structure, homotetramer.

It is found in the cytoplasm. It carries out the reaction D-glyceraldehyde 3-phosphate + phosphate + NAD(+) = (2R)-3-phospho-glyceroyl phosphate + NADH + H(+). It participates in carbohydrate degradation; glycolysis; pyruvate from D-glyceraldehyde 3-phosphate: step 1/5. The chain is Glyceraldehyde-3-phosphate dehydrogenase (GPD) from Ajellomyces capsulatus (Darling's disease fungus).